Reading from the N-terminus, the 296-residue chain is NAD kinase (296 aa).

The active-site Proton acceptor is the Asp72. NAD(+) contacts are provided by residues Asp72–Gly73, Asn146–Asp147, Arg157, Lys174, Asp176, Thr187–Ser192, and Gln247.

This sequence belongs to the NAD kinase family. The cofactor is a divalent metal cation.

The protein resides in the cytoplasm. It carries out the reaction NAD(+) + ATP = ADP + NADP(+) + H(+). In terms of biological role, involved in the regulation of the intracellular balance of NAD and NADP, and is a key enzyme in the biosynthesis of NADP. Catalyzes specifically the phosphorylation on 2'-hydroxyl of the adenosine moiety of NAD to yield NADP. This is NAD kinase from Pseudomonas syringae pv. syringae (strain B728a).